The sequence spans 214 residues: Orotate phosphoribosyltransferase (214 aa).

Position 26 (lysine 26) interacts with 5-phospho-alpha-D-ribose 1-diphosphate. Phenylalanine 34–phenylalanine 35 is a binding site for orotate. 5-phospho-alpha-D-ribose 1-diphosphate-binding positions include tyrosine 72–lysine 73, arginine 99, lysine 100, lysine 103, histidine 105, and aspartate 124–alanine 132. Residues threonine 128 and arginine 157 each coordinate orotate.

This sequence belongs to the purine/pyrimidine phosphoribosyltransferase family. PyrE subfamily. Homodimer. The cofactor is Mg(2+).

The enzyme catalyses orotidine 5'-phosphate + diphosphate = orotate + 5-phospho-alpha-D-ribose 1-diphosphate. It functions in the pathway pyrimidine metabolism; UMP biosynthesis via de novo pathway; UMP from orotate: step 1/2. Functionally, catalyzes the transfer of a ribosyl phosphate group from 5-phosphoribose 1-diphosphate to orotate, leading to the formation of orotidine monophosphate (OMP). This chain is Orotate phosphoribosyltransferase, found in Pseudomonas fluorescens (strain ATCC BAA-477 / NRRL B-23932 / Pf-5).